A 625-amino-acid chain; its full sequence is Probable receptor-like protein kinase At1g11050 (625 aa).

Residues 1 to 20 form the signal peptide; the sequence is MPNSILFLLLSFLYLTNCVA. Over 21-227 the chain is Extracellular; the sequence is QSPSQTCPLD…PLNSKKKRHT (207 aa). N-linked (GlcNAc...) asparagine glycans are attached at residues Asn40, Asn106, Asn121, and Asn177. A helical membrane pass occupies residues 228–248; that stretch reads VALALGITGAIFGALVIAGLI. Residues 249-625 lie on the Cytoplasmic side of the membrane; that stretch reads CLYFRFGKAV…LQIHSGDMLR (377 aa). A Protein kinase domain is found at 295-555; the sequence is FSQKNFIGRG…NPKGIMERFL (261 aa). Residues 301–309 and Lys323 contribute to the ATP site; that span reads IGRGGFGFV. The Proton acceptor role is filled by Asp426.

This sequence belongs to the protein kinase superfamily. Ser/Thr protein kinase family.

The protein localises to the membrane. It catalyses the reaction L-seryl-[protein] + ATP = O-phospho-L-seryl-[protein] + ADP + H(+). The catalysed reaction is L-threonyl-[protein] + ATP = O-phospho-L-threonyl-[protein] + ADP + H(+). This chain is Probable receptor-like protein kinase At1g11050, found in Arabidopsis thaliana (Mouse-ear cress).